Reading from the N-terminus, the 122-residue chain is MNTMIGFIVLLVSATVLGDPELDALRKELDERFDMEFKDGPMSEIQEKLFLQELEALDSELLEDDPQTDTYENSNFREKRCSGSDTPCYKGSKMCCRGLECTEPALYGIWYKSYFCKRPKKG.

An N-terminal signal peptide occupies residues Met-1–Gly-18. Residues Asp-19 to Arg-80 constitute a propeptide that is removed on maturation. Intrachain disulfides connect Cys-81-Cys-96, Cys-88-Cys-101, and Cys-95-Cys-116.

Expressed by the venom gland.

The protein resides in the secreted. Functionally, probable ion channel inhibitor. In Hadronyche infensa (Fraser island funnel-web spider), this protein is U19-hexatoxin-Hi1a.